The following is a 1068-amino-acid chain: Protein AF-10 (1068 aa).

A PHD-type 1 zinc finger spans residues 22 to 74; the sequence is IGGCCVCSDERGWAENPLVYCDGHGCSVAVHQACYGIVQVPTGPWFCRKCESQ. The C2HC pre-PHD-type zinc-finger motif lies at 79–112; sequence RVRCELCPHKDGALKRTDNGGWAHVVCALYIPEV. The tract at residues 80–287 is self-association; sequence VRCELCPHKD…SLKRLEDTTA (208 aa). Residues 106–190 form a required for interaction with histone H3 region; sequence ALYIPEVQFA…EGNGADNVQY (85 aa). The segment at 135 to 198 adopts a PHD-type 2 zinc-finger fold; sequence KTCYICDEQG…QYCGYCKYHF (64 aa). The interval 141–233 is interaction with FSTL3; it reads DEQGRESKAA…QDKHHEKEKK (93 aa). A disordered region spans residues 206 to 260; it reads RGSNRSYDQSLSDSSSHSQDKHHEKEKKKYKEKDKHKQKHKKQPEPSPALVPSLT. The span at 211–222 shows a compositional bias: low complexity; the sequence is SYDQSLSDSSSH. The residue at position 217 (serine 217) is a Phosphoserine. The span at 223–240 shows a compositional bias: basic and acidic residues; it reads SQDKHHEKEKKKYKEKDK. At serine 252 the chain carries Phosphoserine. Residue lysine 280 forms a Glycyl lysine isopeptide (Lys-Gly) (interchain with G-Cter in SUMO2) linkage. Polar residues predominate over residues 291–305; sequence NANFQEVSAHTSSGK. Positions 291–505 are disordered; sequence NANFQEVSAH…SSASPTSSVA (215 aa). Basic and acidic residues predominate over residues 306 to 317; the sequence is DVSETRGSEGKG. The DNA-binding stretch occupies residues 311-674; that stretch reads RGSEGKGKKS…QDLGDNSRNL (364 aa). A compositionally biased stretch (low complexity) spans 352–372; sequence SFSGTPGSVKSSSGSSVQSPQ. 2 stretches are compositionally biased toward polar residues: residues 387-396 and 404-446; these read YSHSQQSSAT and SGSQ…SSLP. Serine 436 is modified (phosphoserine). Basic residues predominate over residues 465–483; the sequence is EKKRKGNKQSKHGPGRPKG. Positions 490-505 are enriched in low complexity; sequence VSHLSVSSASPTSSVA. Residue serine 532 is modified to Phosphoserine. The segment covering 583 to 594 has biased composition (low complexity); it reads SGSGSSTPVSSS. Disordered stretches follow at residues 583-612 and 660-708; these read SGSG…ALSP and NNQT…SLEN. 2 stretches are compositionally biased toward polar residues: residues 595 to 604 and 660 to 673; these read HLPQQSSGHL and NNQT…NSRN. A compositionally biased stretch (low complexity) spans 674-694; sequence LVGRGSSPRGSLSPRSPVSSL. A phosphoserine mark is found at serine 684, serine 686, and serine 689. The interval 703–784 is transactivation domain; required for DOT1L-binding; that stretch reads NSSLENLPPV…NAQLSVPFPT (82 aa). A leucine-zipper region spans residues 750–778; that stretch reads LQVENRRLEEQIKNLTAKKERLQLLNAQL. Positions 800-814 are enriched in polar residues; sequence AQTAPTTDSLNSSKS. The segment at 800 to 865 is disordered; the sequence is AQTAPTTDSL…SPAQQGSGVS (66 aa). 2 stretches are compositionally biased toward low complexity: residues 834 to 848 and 855 to 865; these read LTSS…SALS and QSPAQQGSGVS.

Self-associates. Interacts with FSTL3 isoform 2; the interaction enhances MLLT10 in vitro transcriptional activity and self-association. Interacts with YEATS4. Interacts with SS18. Interacts with DOT1L; this interaction also occurs with the KMT2A/MLL1 fusion protein. Interacts with histone H3; interaction is necessary for MLLT10 binding to nucleosomes; interaction is inhibited by histone H3 'Lys-27' methylations (H3K27me1, H3K27me2 and H3K27me3) amd acetylation; interaction stabilizes association of MLLT10 at chromatin; interaction is essential for histone H3 'Lys-79' dimethylation (H3K79me2). As to expression, expressed abundantly in testis.

The protein localises to the nucleus. Its function is as follows. Probably involved in transcriptional regulation. In vitro or as fusion protein with KMT2A/MLL1 has transactivation activity. Binds to cruciform DNA. In cells, binding to unmodified histone H3 regulates DOT1L functions including histone H3 'Lys-79' dimethylation (H3K79me2) and gene activation. The protein is Protein AF-10 of Homo sapiens (Human).